A 164-amino-acid polypeptide reads, in one-letter code: Shikimate kinase (164 aa).

An ATP-binding site is contributed by 11 to 16 (GSGKST). Mg(2+) is bound at residue serine 15. Residues aspartate 33, arginine 57, and glycine 79 each contribute to the substrate site. Residue arginine 117 coordinates ATP. Arginine 134 lines the substrate pocket.

The protein belongs to the shikimate kinase family. In terms of assembly, monomer. Mg(2+) is required as a cofactor.

Its subcellular location is the cytoplasm. The catalysed reaction is shikimate + ATP = 3-phosphoshikimate + ADP + H(+). It functions in the pathway metabolic intermediate biosynthesis; chorismate biosynthesis; chorismate from D-erythrose 4-phosphate and phosphoenolpyruvate: step 5/7. In terms of biological role, catalyzes the specific phosphorylation of the 3-hydroxyl group of shikimic acid using ATP as a cosubstrate. The protein is Shikimate kinase of Persephonella marina (strain DSM 14350 / EX-H1).